Reading from the N-terminus, the 158-residue chain is Cyclic pyranopterin monophosphate synthase (158 aa).

Residues 75-77 (LCH) and 113-114 (ME) contribute to the substrate site. Asp128 is a catalytic residue.

Belongs to the MoaC family. As to quaternary structure, homohexamer; trimer of dimers.

It carries out the reaction (8S)-3',8-cyclo-7,8-dihydroguanosine 5'-triphosphate = cyclic pyranopterin phosphate + diphosphate. Its pathway is cofactor biosynthesis; molybdopterin biosynthesis. In terms of biological role, catalyzes the conversion of (8S)-3',8-cyclo-7,8-dihydroguanosine 5'-triphosphate to cyclic pyranopterin monophosphate (cPMP). The sequence is that of Cyclic pyranopterin monophosphate synthase from Mannheimia succiniciproducens (strain KCTC 0769BP / MBEL55E).